Here is a 961-residue protein sequence, read N- to C-terminus: Probable exosome complex exonuclease RRP44 (961 aa).

In terms of domain architecture, PINc spans 73–188; that stretch reads HALIVDSTSL…LVFDEDSKKR (116 aa). The CSD1 domain maps to 232-338; it reads IFDEYLSHDR…DEENDDENDE (107 aa). The disordered stretch occupies residues 322-346; the sequence is ADDMGNEDEENDDENDEPKAKKSKK. The span at 325–337 shows a compositional bias: acidic residues; the sequence is MGNEDEENDDEND. The 67-residue stretch at 381–447 folds into the CSD2 domain; the sequence is LFCPAERLIP…ENEVLLLEHD (67 aa). In terms of domain architecture, RNB spans 479–809; the sequence is RVDLRDLTIC…IVHRLLAAAI (331 aa).

The protein belongs to the RNR ribonuclease family. In terms of assembly, component of the RNA exosome complex. As to expression, ubiquitously expressed.

Its subcellular location is the nucleus. It is found in the nucleoplasm. Its function is as follows. Putative catalytic component of the RNA exosome complex which has 3'-&gt;5' exoribonuclease activity and participates in a multitude of cellular RNA processing and degradation events. Has both 3'-5' exonuclease and endonuclease activities. Involved in regulation of antisense ribosomal siRNA production. In Caenorhabditis elegans, this protein is Probable exosome complex exonuclease RRP44 (dis-3).